Consider the following 216-residue polypeptide: Peptide deformylase (216 aa).

Residues C134 and H178 each contribute to the Fe cation site. E179 is an active-site residue. H182 contacts Fe cation.

This sequence belongs to the polypeptide deformylase family. Fe(2+) is required as a cofactor.

It carries out the reaction N-terminal N-formyl-L-methionyl-[peptide] + H2O = N-terminal L-methionyl-[peptide] + formate. Functionally, removes the formyl group from the N-terminal Met of newly synthesized proteins. Requires at least a dipeptide for an efficient rate of reaction. N-terminal L-methionine is a prerequisite for activity but the enzyme has broad specificity at other positions. In Mycoplasma pneumoniae (strain ATCC 29342 / M129 / Subtype 1) (Mycoplasmoides pneumoniae), this protein is Peptide deformylase.